Consider the following 349-residue polypeptide: Nicotinate-nucleotide--dimethylbenzimidazole phosphoribosyltransferase (349 aa).

Residue glutamate 315 is the Proton acceptor of the active site.

Belongs to the CobT family.

It catalyses the reaction 5,6-dimethylbenzimidazole + nicotinate beta-D-ribonucleotide = alpha-ribazole 5'-phosphate + nicotinate + H(+). The protein operates within nucleoside biosynthesis; alpha-ribazole biosynthesis; alpha-ribazole from 5,6-dimethylbenzimidazole: step 1/2. Functionally, catalyzes the synthesis of alpha-ribazole-5'-phosphate from nicotinate mononucleotide (NAMN) and 5,6-dimethylbenzimidazole (DMB). The chain is Nicotinate-nucleotide--dimethylbenzimidazole phosphoribosyltransferase from Variovorax paradoxus (strain S110).